The primary structure comprises 307 residues: Probable rRNA-processing protein EBP2 homolog (307 aa).

Disordered stretches follow at residues 1–22 (MSDF…SDAE), 189–208 (QRKM…EAEK), and 236–307 (ESKQ…KGRK). A coiled-coil region spans residues 205-252 (EAEKKDMLDKLKKFRKGKLKNLDFLEDAKALESKQKQSAENRKKRNKK). Positions 236–245 (ESKQKQSAEN) are enriched in basic and acidic residues. Basic residues-rich tracts occupy residues 246–266 (RKKR…KRNT) and 294–307 (RLGK…KGRK).

Belongs to the EBP2 family.

Its subcellular location is the nucleus. It is found in the nucleolus. Required for the processing of the 27S pre-rRNA. The chain is Probable rRNA-processing protein EBP2 homolog from Drosophila melanogaster (Fruit fly).